A 278-amino-acid polypeptide reads, in one-letter code: 4-deoxy-L-threo-5-hexosulose-uronate ketol-isomerase (278 aa).

Positions 196, 198, 203, and 245 each coordinate Zn(2+).

This sequence belongs to the KduI family. Requires Zn(2+) as cofactor.

It carries out the reaction 5-dehydro-4-deoxy-D-glucuronate = 3-deoxy-D-glycero-2,5-hexodiulosonate. Its pathway is glycan metabolism; pectin degradation; 2-dehydro-3-deoxy-D-gluconate from pectin: step 4/5. Catalyzes the isomerization of 5-dehydro-4-deoxy-D-glucuronate to 3-deoxy-D-glycero-2,5-hexodiulosonate. The chain is 4-deoxy-L-threo-5-hexosulose-uronate ketol-isomerase from Shigella sonnei (strain Ss046).